The sequence spans 163 residues: Lipoprotein signal peptidase (163 aa).

The next 3 membrane-spanning stretches (helical) occupy residues 11 to 31 (ILIAVFVVIFDQVTKYIIATT), 63 to 83 (KMTFFFIITIIILIALVYFFI), and 88 to 108 (YNLFMQVAISLLFAGALGNFI). Catalysis depends on residues Asp118 and Asp136. Residues 131 to 151 (IFNIADSSLTIGVILIIIALL) traverse the membrane as a helical segment.

It belongs to the peptidase A8 family.

The protein resides in the cell membrane. The catalysed reaction is Release of signal peptides from bacterial membrane prolipoproteins. Hydrolyzes -Xaa-Yaa-Zaa-|-(S,diacylglyceryl)Cys-, in which Xaa is hydrophobic (preferably Leu), and Yaa (Ala or Ser) and Zaa (Gly or Ala) have small, neutral side chains.. It functions in the pathway protein modification; lipoprotein biosynthesis (signal peptide cleavage). This protein specifically catalyzes the removal of signal peptides from prolipoproteins. This Staphylococcus aureus (strain MRSA252) protein is Lipoprotein signal peptidase.